Here is a 301-residue protein sequence, read N- to C-terminus: D-alanine--D-alanine ligase (301 aa).

The region spanning 99-294 is the ATP-grasp domain; it reads KSVLEANGIR…FSELIDMIIQ (196 aa). 126–181 lines the ATP pocket; the sequence is INELGYPVVVKPTHGGSSVATFIVKEEKEIENCVSEAFKWDSEVMIEKFIKGDEIT. Aspartate 248, glutamate 261, and asparagine 263 together coordinate Mg(2+).

The protein belongs to the D-alanine--D-alanine ligase family. The cofactor is Mg(2+). Requires Mn(2+) as cofactor.

The protein resides in the cytoplasm. It catalyses the reaction 2 D-alanine + ATP = D-alanyl-D-alanine + ADP + phosphate + H(+). The protein operates within cell wall biogenesis; peptidoglycan biosynthesis. Its function is as follows. Cell wall formation. This Clostridium beijerinckii (strain ATCC 51743 / NCIMB 8052) (Clostridium acetobutylicum) protein is D-alanine--D-alanine ligase.